The sequence spans 232 residues: Lipoprotein-releasing system ATP-binding protein LolD (232 aa).

The region spanning 11-231 (VYLHDIKREY…SLENGHVVEL (221 aa)) is the ABC transporter domain. Position 47-54 (47-54 (APSGSGKS)) interacts with ATP.

Belongs to the ABC transporter superfamily. Lipoprotein translocase (TC 3.A.1.125) family. As to quaternary structure, the complex is composed of two ATP-binding proteins (LolD) and two transmembrane proteins (LolC and LolE).

The protein localises to the cell inner membrane. Part of the ABC transporter complex LolCDE involved in the translocation of mature outer membrane-directed lipoproteins, from the inner membrane to the periplasmic chaperone, LolA. Responsible for the formation of the LolA-lipoprotein complex in an ATP-dependent manner. The protein is Lipoprotein-releasing system ATP-binding protein LolD of Nitrobacter winogradskyi (strain ATCC 25391 / DSM 10237 / CIP 104748 / NCIMB 11846 / Nb-255).